A 340-amino-acid polypeptide reads, in one-letter code: MILSIESSCDDSSLALTRIEDAQLIAHFKISQEKHHSSYGGVVPELASRLHAENLPLLLERIKISLNKDFSKIKAIAITNQPGLSVTLIEGLMMAKALSLSLNLPLILEDHLRGHVYSLFINEKQTCMPLSVLLVSGGHSLILEARDYENIKIVATSLDDSFGESFDKVSKMLDLGYPGGPIVEKLALDYRHPNEPLMFPIPLKNSPNLAFSFSGLKNAVRLEVEKNAPNLNEAIKQKIGYHFQSAAIEHLIQQTKRYFKIKRPKIFGIVGGASQNLALRKAFENLCDAFDCKLVLAPLEFCSDNAAMIGRSSLEAYQKKRFVPLEKANISPRTLLKSFE.

Positions 111 and 115 each coordinate Fe cation. Residues 134–138 (LVSGG), aspartate 167, glycine 180, and asparagine 276 each bind substrate. Aspartate 304 is a binding site for Fe cation.

It belongs to the KAE1 / TsaD family. Requires Fe(2+) as cofactor.

Its subcellular location is the cytoplasm. The catalysed reaction is L-threonylcarbamoyladenylate + adenosine(37) in tRNA = N(6)-L-threonylcarbamoyladenosine(37) in tRNA + AMP + H(+). Its function is as follows. Required for the formation of a threonylcarbamoyl group on adenosine at position 37 (t(6)A37) in tRNAs that read codons beginning with adenine. Is involved in the transfer of the threonylcarbamoyl moiety of threonylcarbamoyl-AMP (TC-AMP) to the N6 group of A37, together with TsaE and TsaB. TsaD likely plays a direct catalytic role in this reaction. The sequence is that of tRNA N6-adenosine threonylcarbamoyltransferase from Helicobacter pylori (strain ATCC 700392 / 26695) (Campylobacter pylori).